The following is a 65-amino-acid chain: Large ribosomal subunit protein bL35 (65 aa).

This sequence belongs to the bacterial ribosomal protein bL35 family.

The protein is Large ribosomal subunit protein bL35 of Prochlorococcus marinus (strain MIT 9215).